Here is a 362-residue protein sequence, read N- to C-terminus: Probable cysteine protease RDL2 (362 aa).

A signal peptide spans 1–28 (MAATPIRVIVSALVILSVLLLSSSLGVA). The propeptide at 29–129 (TETEIERNET…ERYLYKEGDV (101 aa)) is activation peptide. An N-linked (GlcNAc...) asparagine glycan is attached at asparagine 36. Cystine bridges form between cysteine 151/cysteine 194 and cysteine 185/cysteine 228. The active site involves cysteine 154. Residue asparagine 234 is glycosylated (N-linked (GlcNAc...) asparagine). A disulfide bond links cysteine 287 and cysteine 338. Active-site residues include histidine 293 and asparagine 313.

It belongs to the peptidase C1 family.

Its function is as follows. Probable thiol protease. This chain is Probable cysteine protease RDL2, found in Arabidopsis thaliana (Mouse-ear cress).